Reading from the N-terminus, the 88-residue chain is Small ribosomal subunit protein bS20 (88 aa).

It belongs to the bacterial ribosomal protein bS20 family.

In terms of biological role, binds directly to 16S ribosomal RNA. The protein is Small ribosomal subunit protein bS20 of Rhodopseudomonas palustris (strain BisB18).